Consider the following 53-residue polypeptide: LSSGEKDLVVIGSGPGGYVAAIKAAQLGMLTVCIEKYPTFGGTCLNVGCIPSK.

FAD-binding positions include 35-44 and K53; that span reads EKYPTFGGTC. C44 and C49 are joined by a disulfide.

It belongs to the class-I pyridine nucleotide-disulfide oxidoreductase family. As to quaternary structure, homodimer. The cofactor is FAD.

Its subcellular location is the mitochondrion. It catalyses the reaction N(6)-[(R)-dihydrolipoyl]-L-lysyl-[protein] + NAD(+) = N(6)-[(R)-lipoyl]-L-lysyl-[protein] + NADH + H(+). With respect to regulation, lipoamide reduction and the NADH -&gt; NAD reaction are both completely inhibited by copper and cadmium ions. In terms of biological role, lipoamide dehydrogenase is a component of the glycine cleavage system as well as of the alpha-ketoacid dehydrogenase complexes. This enzyme has lipoamide dehydrogenase activity and NADH -&gt; NAD transhydrogenation activity. Also displays some NADH-ferricyanide reductase and NADPH -&gt; NAD transydrogenation activities. This is Dihydrolipoyl dehydrogenase from Hymenolepis diminuta (Rat tapeworm).